A 303-amino-acid polypeptide reads, in one-letter code: Porphobilinogen deaminase (303 aa).

At cysteine 241 the chain carries S-(dipyrrolylmethanemethyl)cysteine.

This sequence belongs to the HMBS family. In terms of assembly, monomer. The cofactor is dipyrromethane.

The enzyme catalyses 4 porphobilinogen + H2O = hydroxymethylbilane + 4 NH4(+). It participates in porphyrin-containing compound metabolism; protoporphyrin-IX biosynthesis; coproporphyrinogen-III from 5-aminolevulinate: step 2/4. The protein operates within porphyrin-containing compound metabolism; chlorophyll biosynthesis. In terms of biological role, tetrapolymerization of the monopyrrole PBG into the hydroxymethylbilane pre-uroporphyrinogen in several discrete steps. This is Porphobilinogen deaminase from Roseiflexus sp. (strain RS-1).